The chain runs to 229 residues: Imidazoleglycerol-phosphate dehydratase (229 aa).

The protein belongs to the imidazoleglycerol-phosphate dehydratase family.

It catalyses the reaction D-erythro-1-(imidazol-4-yl)glycerol 3-phosphate = 3-(imidazol-4-yl)-2-oxopropyl phosphate + H2O. It functions in the pathway amino-acid biosynthesis; L-histidine biosynthesis; L-histidine from 5-phospho-alpha-D-ribose 1-diphosphate: step 6/9. This chain is Imidazoleglycerol-phosphate dehydratase, found in Neurospora crassa (strain ATCC 24698 / 74-OR23-1A / CBS 708.71 / DSM 1257 / FGSC 987).